Reading from the N-terminus, the 405-residue chain is S-adenosylmethionine synthase (405 aa).

139-144 (GKGSAD) contacts ATP.

This sequence belongs to the AdoMet synthase 2 family. It depends on Mg(2+) as a cofactor.

The catalysed reaction is L-methionine + ATP + H2O = S-adenosyl-L-methionine + phosphate + diphosphate. The protein operates within amino-acid biosynthesis; S-adenosyl-L-methionine biosynthesis; S-adenosyl-L-methionine from L-methionine: step 1/1. Its function is as follows. Catalyzes the formation of S-adenosylmethionine from methionine and ATP. The polypeptide is S-adenosylmethionine synthase (Sulfurisphaera tokodaii (strain DSM 16993 / JCM 10545 / NBRC 100140 / 7) (Sulfolobus tokodaii)).